A 303-amino-acid chain; its full sequence is UDP-3-O-acyl-N-acetylglucosamine deacetylase (303 aa).

Residues His78, His237, and Asp241 each contribute to the Zn(2+) site. The active-site Proton donor is the His264.

This sequence belongs to the LpxC family. Zn(2+) is required as a cofactor.

The enzyme catalyses a UDP-3-O-[(3R)-3-hydroxyacyl]-N-acetyl-alpha-D-glucosamine + H2O = a UDP-3-O-[(3R)-3-hydroxyacyl]-alpha-D-glucosamine + acetate. Its pathway is glycolipid biosynthesis; lipid IV(A) biosynthesis; lipid IV(A) from (3R)-3-hydroxytetradecanoyl-[acyl-carrier-protein] and UDP-N-acetyl-alpha-D-glucosamine: step 2/6. Functionally, catalyzes the hydrolysis of UDP-3-O-myristoyl-N-acetylglucosamine to form UDP-3-O-myristoylglucosamine and acetate, the committed step in lipid A biosynthesis. In Pseudomonas paraeruginosa (strain DSM 24068 / PA7) (Pseudomonas aeruginosa (strain PA7)), this protein is UDP-3-O-acyl-N-acetylglucosamine deacetylase.